The following is a 354-amino-acid chain: Protein FAM181A (354 aa).

Composition is skewed to basic and acidic residues over residues 1–14 and 129–142; these read MPLE…ERND and YLKR…RRLL. Disordered stretches follow at residues 1 to 35, 117 to 160, and 172 to 193; these read MPLE…KQVS, LPRG…CKEK, and AKEQ…VPMR.

It belongs to the FAM181 family.

The chain is Protein FAM181A (FAM181A) from Homo sapiens (Human).